We begin with the raw amino-acid sequence, 651 residues long: MPIQVLPPQLANQIAAGEVVERPASVVKELVENSLDAGATRIDIDIERGGAKLIRIRDNGSGIGKDELTLALARHATSKIATLDDLEAIVSMGFRGEALASISSVSRLTLTSRTAEQSEAWQAYAEGRDMAVTVKPAAHPVGTTLEVLDLFYNTPARRKFMRTEKTEFTHIDEVVRRIALARFDVAITLHHNGKLMRQYRAAPDKNQYERRLGSICGATFLQHALAVSWQHGDLTIHGWVADPVGAKQLPDMQYCYVNQRMMRDRLINHAIRQAYQDQLSDEQQPAYVLYLEIDPHQVDVNVHPAKQEVRFHQARLVHDFIYQAVMSVLQQASAPRLDMTEPETGKPVQWQQENRPAAGENHFAQPPRTTNSPSYSGKAPRTGQARESANSGYQPENPYQKKQDELYKALLQPTDNGASTPPSGIAAPSTVLHDSCPNRTATNTAASNNKQRALVESPLESQSTGFGRVLTVYPPCYALLEYHKGLAILSLPVAERYLKVVQLTPSEEGLRAQPLLIPQRLTLSKSELNVLSTHHTLLTRFGIDVFVESQRATLRAVPLPLRQQNLQNLISELIGYLADYQTVETQQVEPDALASWMATRLQSEQENWSHSQAIQLLADVERLCPQLAKTPPSELLYMMDIHDAIKALKHE.

The disordered stretch occupies residues 336–398 (RLDMTEPETG…ANSGYQPENP (63 aa)). Residues 385–394 (ARESANSGYQ) are compositionally biased toward polar residues.

The protein belongs to the DNA mismatch repair MutL/HexB family.

This protein is involved in the repair of mismatches in DNA. It is required for dam-dependent methyl-directed DNA mismatch repair. May act as a 'molecular matchmaker', a protein that promotes the formation of a stable complex between two or more DNA-binding proteins in an ATP-dependent manner without itself being part of a final effector complex. The chain is DNA mismatch repair protein MutL from Pectobacterium atrosepticum (strain SCRI 1043 / ATCC BAA-672) (Erwinia carotovora subsp. atroseptica).